The primary structure comprises 432 residues: Homogentisate 1,2-dioxygenase (432 aa).

The active-site Proton acceptor is the H286. Positions 329 and 335 each coordinate Fe cation. Homogentisate-binding residues include Y344 and H365. H365 contributes to the Fe cation binding site.

Belongs to the homogentisate dioxygenase family. In terms of assembly, hexamer; dimer of trimers. The cofactor is Fe cation.

It carries out the reaction homogentisate + O2 = 4-maleylacetoacetate + H(+). It functions in the pathway amino-acid degradation; L-phenylalanine degradation; acetoacetate and fumarate from L-phenylalanine: step 4/6. Functionally, involved in the catabolism of homogentisate (2,5-dihydroxyphenylacetate or 2,5-OH-PhAc), a central intermediate in the degradation of phenylalanine and tyrosine. Catalyzes the oxidative ring cleavage of the aromatic ring of homogentisate to yield maleylacetoacetate. The chain is Homogentisate 1,2-dioxygenase from Bordetella pertussis (strain Tohama I / ATCC BAA-589 / NCTC 13251).